The chain runs to 125 residues: MSTKKIMLKSSDGKMFEIEEETARQCQTIAHMIEAECTDNVIPVSNVTSEILEMVIEYCNKHHVDAANPCSDEDLKKWDKEFMEKDQYTIFHLMNAAYDLHIKSLLALAYQTVADMVNDNKWAFE.

Residues 94–125 (MNAAYDLHIKSLLALAYQTVADMVNDNKWAFE) form an interaction with the F-box domain of F-box proteins region.

This sequence belongs to the SKP1 family. As to quaternary structure, part of a SCF (SKP1-cullin-F-box) protein ligase complex. As to expression, restricted to siliques.

The protein localises to the nucleus. It participates in protein modification; protein ubiquitination. Functionally, involved in ubiquitination and subsequent proteasomal degradation of target proteins. Together with CUL1, RBX1 and a F-box protein, it forms a SCF E3 ubiquitin ligase complex. The functional specificity of this complex depends on the type of F-box protein. In the SCF complex, it serves as an adapter that links the F-box protein to CUL1. The sequence is that of SKP1-like protein 7 (ASK7) from Arabidopsis thaliana (Mouse-ear cress).